The following is a 277-amino-acid chain: MAAPVVTMQNLIEAGAHFGHQTHRWNPRMKPYIFGARNGIHILDLSQTVPLFARALDFIASTAASGGKVLFVGTKRQAQGPIADAARASGQHFVNHRWLGGMLTNWKTISNSIKRLKTLEEQLSGDTSGLTKKEVLNKTRERDKLEMSLGGIRDMGGIPDVMFVIDANKEELAIKEANVLGIPVVAILDSNVSPDGIAFPVPANDDAARAIRLYCDAVAQAATRGGQQARADRGEDLGAAVEPVAEPALVEEAAAPVTEDEQVPAEAAAETERQSDA.

The disordered stretch occupies residues 226-277 (GQQARADRGEDLGAAVEPVAEPALVEEAAAPVTEDEQVPAEAAAETERQSDA). Low complexity predominate over residues 239–257 (AAVEPVAEPALVEEAAAPV).

It belongs to the universal ribosomal protein uS2 family.

The chain is Small ribosomal subunit protein uS2 from Sphingopyxis alaskensis (strain DSM 13593 / LMG 18877 / RB2256) (Sphingomonas alaskensis).